We begin with the raw amino-acid sequence, 120 residues long: UPF0231 protein YacL (120 aa).

The protein belongs to the UPF0231 family.

This is UPF0231 protein YacL from Salmonella typhi.